The chain runs to 349 residues: MRILGIETSCDETGIAIYDDGLGDSPEGILAHRLYSQIAVHADYGGVVPELASRDHVRKTIPLIKEVLADANLTPKDLDGVAYTAGPGLVGALLVGCSIGRSLAYGWELPAVPVHHMEGHLLAPMLEDDVPEFPFVALLVSGGHTMLVRVDAIGEYKLLGESVDDAAGEAFDKTAKLLGLDYPGGPALSKMAESGEAGRFKLPRPMTDRPGLDFSFSGLKTAAGTLVRKECLNLSDSDLKQTHADIANAFQQAVVDTLAIKCKRALQQEKLSRLVIAGGVSANTALREQLAITTKKLGGSVFYPRPEFCTDNGAMIAYAGLQRLKAGTDADLTFKANPRWALDSLPPVK.

2 residues coordinate Fe cation: histidine 116 and histidine 120. Residues 139 to 143 (LVSGG), aspartate 172, glycine 185, and asparagine 283 each bind substrate. Fe cation is bound at residue aspartate 311.

It belongs to the KAE1 / TsaD family. The cofactor is Fe(2+).

Its subcellular location is the cytoplasm. The enzyme catalyses L-threonylcarbamoyladenylate + adenosine(37) in tRNA = N(6)-L-threonylcarbamoyladenosine(37) in tRNA + AMP + H(+). Its function is as follows. Required for the formation of a threonylcarbamoyl group on adenosine at position 37 (t(6)A37) in tRNAs that read codons beginning with adenine. Is involved in the transfer of the threonylcarbamoyl moiety of threonylcarbamoyl-AMP (TC-AMP) to the N6 group of A37, together with TsaE and TsaB. TsaD likely plays a direct catalytic role in this reaction. This is tRNA N6-adenosine threonylcarbamoyltransferase from Colwellia psychrerythraea (strain 34H / ATCC BAA-681) (Vibrio psychroerythus).